Consider the following 285-residue polypeptide: Protease HtpX homolog (285 aa).

2 helical membrane passes run 7–27 and 30–50; these read TAMLMAAITALFIVIGGMIGG and GMTIALLFALGMNFFSYWFSD. His-131 contacts Zn(2+). Residue Glu-132 is part of the active site. A Zn(2+)-binding site is contributed by His-135. The next 2 helical transmembrane spans lie at 146–166 and 177–197; these read ITATMAGAISAIANFAMFFGG and IAGIAVALLAPIAGALIQMAI. Glu-202 contacts Zn(2+).

It belongs to the peptidase M48B family. The cofactor is Zn(2+).

It localises to the cell inner membrane. This is Protease HtpX homolog from Burkholderia multivorans (strain ATCC 17616 / 249).